The sequence spans 297 residues: Vacuolar protein sorting-associated protein 26 (297 aa).

The protein belongs to the VPS26 family. In terms of assembly, component of the retromer complex, composed of VPS26, VPS29 and VPS35. As part of the retromer complex, interacts with the sorting receptor SORTLR/sortilin. Interacts with GTPase RAB7.

Plays a role in vesicular protein sorting. Component of the membrane-associated retromer complex which is essential in endosome-to-Golgi retrograde transport. The polypeptide is Vacuolar protein sorting-associated protein 26 (Plasmodium falciparum (isolate 3D7)).